We begin with the raw amino-acid sequence, 456 residues long: Anthranilate synthase component 1 (456 aa).

L-tryptophan contacts are provided by residues Ser-31 and 244–246; that span reads SYM. 279 to 280 contributes to the chorismate binding site; that stretch reads GT. Glu-306 is a binding site for Mg(2+). Residues Tyr-394, Arg-414, 428–430, and Gly-430 each bind chorismate; that span reads GAG. Glu-443 serves as a coordination point for Mg(2+).

The protein belongs to the anthranilate synthase component I family. Heterotetramer consisting of two non-identical subunits: a beta subunit (TrpG) and a large alpha subunit (TrpE). It depends on Mg(2+) as a cofactor.

It catalyses the reaction chorismate + L-glutamine = anthranilate + pyruvate + L-glutamate + H(+). The protein operates within amino-acid biosynthesis; L-tryptophan biosynthesis; L-tryptophan from chorismate: step 1/5. Its activity is regulated as follows. Feedback inhibited by tryptophan. Functionally, part of a heterotetrameric complex that catalyzes the two-step biosynthesis of anthranilate, an intermediate in the biosynthesis of L-tryptophan. In the first step, the glutamine-binding beta subunit (TrpG) of anthranilate synthase (AS) provides the glutamine amidotransferase activity which generates ammonia as a substrate that, along with chorismate, is used in the second step, catalyzed by the large alpha subunit of AS (TrpE) to produce anthranilate. In the absence of TrpG, TrpE can synthesize anthranilate directly from chorismate and high concentrations of ammonia. The protein is Anthranilate synthase component 1 (trpE) of Lactococcus lactis subsp. lactis (strain IL1403) (Streptococcus lactis).